We begin with the raw amino-acid sequence, 860 residues long: uncharacterized protein (860 aa).

Basic and acidic residues-rich tracts occupy residues 334–345 and 536–551; these read LEKKSLQSDSKN and EDQK…LSDK. Disordered stretches follow at residues 334-360, 530-551, 708-798, and 813-842; these read LEKK…LRKE, EEDD…LSDK, ARKT…EDEF, and PFNE…RKAI. Composition is skewed to acidic residues over residues 716–725, 738–750, and 813–824; these read DEEGEIDEDE, EMDE…DSEE, and PFNETDDEEEIQ. Residues Ser744 and Ser748 each carry the phosphoserine modification.

Belongs to the CBF/MAK21 family.

This is an uncharacterized protein from Schizosaccharomyces pombe (strain 972 / ATCC 24843) (Fission yeast).